A 179-amino-acid polypeptide reads, in one-letter code: tRNA (cytidine(56)-2'-O)-methyltransferase (179 aa).

Residues L82, 112-116, and 130-137 contribute to the S-adenosyl-L-methionine site; these read GAEKV and VGNQPHSE.

The protein belongs to the aTrm56 family. As to quaternary structure, homodimer.

Its subcellular location is the cytoplasm. The enzyme catalyses cytidine(56) in tRNA + S-adenosyl-L-methionine = 2'-O-methylcytidine(56) in tRNA + S-adenosyl-L-homocysteine + H(+). Specifically catalyzes the AdoMet-dependent 2'-O-ribose methylation of cytidine at position 56 in tRNAs. In Methanococcus maripaludis (strain DSM 14266 / JCM 13030 / NBRC 101832 / S2 / LL), this protein is tRNA (cytidine(56)-2'-O)-methyltransferase.